We begin with the raw amino-acid sequence, 187 residues long: Elongation factor P (187 aa).

This sequence belongs to the elongation factor P family.

The protein resides in the cytoplasm. The protein operates within protein biosynthesis; polypeptide chain elongation. Functionally, involved in peptide bond synthesis. Stimulates efficient translation and peptide-bond synthesis on native or reconstituted 70S ribosomes in vitro. Probably functions indirectly by altering the affinity of the ribosome for aminoacyl-tRNA, thus increasing their reactivity as acceptors for peptidyl transferase. The polypeptide is Elongation factor P (Helicobacter acinonychis (strain Sheeba)).